Consider the following 151-residue polypeptide: Nucleoside diphosphate kinase (151 aa).

ATP contacts are provided by Lys-9, Phe-57, Arg-86, Thr-92, Arg-103, and Asn-113. His-116 acts as the Pros-phosphohistidine intermediate in catalysis.

The protein belongs to the NDK family. As to quaternary structure, homotetramer. The cofactor is Mg(2+).

It localises to the cytoplasm. It carries out the reaction a 2'-deoxyribonucleoside 5'-diphosphate + ATP = a 2'-deoxyribonucleoside 5'-triphosphate + ADP. It catalyses the reaction a ribonucleoside 5'-diphosphate + ATP = a ribonucleoside 5'-triphosphate + ADP. Major role in the synthesis of nucleoside triphosphates other than ATP. The ATP gamma phosphate is transferred to the NDP beta phosphate via a ping-pong mechanism, using a phosphorylated active-site intermediate. The chain is Nucleoside diphosphate kinase from Chloroflexus aurantiacus (strain ATCC 29364 / DSM 637 / Y-400-fl).